The primary structure comprises 59 residues: Potassium channel toxin alpha-KTx 16.2 (59 aa).

The N-terminal stretch at methionine 1–alanine 22 is a signal peptide. 3 disulfides stabilise this stretch: cysteine 30-cysteine 51, cysteine 36-cysteine 56, and cysteine 40-cysteine 58.

This sequence belongs to the short scorpion toxin superfamily. Potassium channel inhibitor family. Alpha-KTx 16 subfamily. In terms of tissue distribution, expressed by the venom gland.

It localises to the secreted. Alpha-KTx 16.2: inhibits large conductance calcium-activated potassium channels (KCa1.1/Slo-beta4 KCNMA1/KCNMB4). It appears to block channel activity by a simple bimolecular inhibition process. Shows a fast association rate and a slow dissociation rate of binding on rat brain synaptosome. Significantly inhibits voltage-dependent sodium current and voltage-dependent delayed rectifier potassium currents. Its function is as follows. Significantly inhibits voltage-dependent sodium current (Nav) and voltage-dependent delayed rectifier potassium current. The polypeptide is Potassium channel toxin alpha-KTx 16.2 (Olivierus martensii (Manchurian scorpion)).